Consider the following 305-residue polypeptide: Nitrogen assimilation regulatory protein nac (305 aa).

Residues 1–58 (MNLRRLKYFVKIVDIGSLTQAAEVLHIAQPALSQQVATLEGEMDQQLLIRTKRGVTPT) enclose the HTH lysR-type domain. The H-T-H motif DNA-binding region spans 18–37 (LTQAAEVLHIAQPALSQQVA).

It belongs to the LysR transcriptional regulatory family.

Transcriptional activator for the hut, put and ure operons and repressor for the gdh and gltB operons in response to nitrogen limitation. Negative regulator of its own expression. The chain is Nitrogen assimilation regulatory protein nac (nac) from Klebsiella aerogenes (Enterobacter aerogenes).